We begin with the raw amino-acid sequence, 344 residues long: sn-glycerol-3-phosphate import ATP-binding protein UgpC 2 (344 aa).

The ABC transporter domain maps to 4–234 (IELIDLKKNY…PETVFVAGFI (231 aa)). Position 36–43 (36–43 (GPSGCGKS)) interacts with ATP.

This sequence belongs to the ABC transporter superfamily. sn-glycerol-3-phosphate importer (TC 3.A.1.1.3) family. As to quaternary structure, the complex is composed of two ATP-binding proteins (UgpC), two transmembrane proteins (UgpA and UgpE) and a solute-binding protein (UgpB).

It localises to the cell inner membrane. The enzyme catalyses sn-glycerol 3-phosphate(out) + ATP + H2O = sn-glycerol 3-phosphate(in) + ADP + phosphate + H(+). Part of the ABC transporter complex UgpBAEC involved in sn-glycerol-3-phosphate (G3P) import. Responsible for energy coupling to the transport system. This chain is sn-glycerol-3-phosphate import ATP-binding protein UgpC 2, found in Rhizobium johnstonii (strain DSM 114642 / LMG 32736 / 3841) (Rhizobium leguminosarum bv. viciae).